A 151-amino-acid chain; its full sequence is Gametocyte-specific factor 1-like (151 aa).

CHHC U11-48K-type zinc fingers lie at residues 6–33 and 40–67; these read IEIC…RKKN and MASC…VNRS. Zn(2+) contacts are provided by Cys9, His15, His25, Cys29, Cys43, His49, His59, and Cys63. The interval 130–151 is disordered; sequence QESRGGDQCPEDPQTRTRKANF.

This sequence belongs to the UPF0224 (FAM112) family.

This is Gametocyte-specific factor 1-like (Gtsf1l) from Mus musculus (Mouse).